Consider the following 213-residue polypeptide: dTTP/UTP pyrophosphatase (213 aa).

The active-site Proton acceptor is Asp-92.

It belongs to the Maf family. YhdE subfamily. Requires a divalent metal cation as cofactor.

Its subcellular location is the cytoplasm. It catalyses the reaction dTTP + H2O = dTMP + diphosphate + H(+). The enzyme catalyses UTP + H2O = UMP + diphosphate + H(+). Its function is as follows. Nucleoside triphosphate pyrophosphatase that hydrolyzes dTTP and UTP. May have a dual role in cell division arrest and in preventing the incorporation of modified nucleotides into cellular nucleic acids. In Granulibacter bethesdensis (strain ATCC BAA-1260 / CGDNIH1), this protein is dTTP/UTP pyrophosphatase.